Here is a 334-residue protein sequence, read N- to C-terminus: UDP-N-acetylglucosamine--N-acetylmuramyl-(pentapeptide) pyrophosphoryl-undecaprenol N-acetylglucosamine transferase (334 aa).

Residues 11–13 (TGG), asparagine 125, serine 185, isoleucine 229, and glutamine 274 each bind UDP-N-acetyl-alpha-D-glucosamine.

This sequence belongs to the glycosyltransferase 28 family. MurG subfamily.

Its subcellular location is the cell inner membrane. The catalysed reaction is di-trans,octa-cis-undecaprenyl diphospho-N-acetyl-alpha-D-muramoyl-L-alanyl-D-glutamyl-meso-2,6-diaminopimeloyl-D-alanyl-D-alanine + UDP-N-acetyl-alpha-D-glucosamine = di-trans,octa-cis-undecaprenyl diphospho-[N-acetyl-alpha-D-glucosaminyl-(1-&gt;4)]-N-acetyl-alpha-D-muramoyl-L-alanyl-D-glutamyl-meso-2,6-diaminopimeloyl-D-alanyl-D-alanine + UDP + H(+). It functions in the pathway cell wall biogenesis; peptidoglycan biosynthesis. Its function is as follows. Cell wall formation. Catalyzes the transfer of a GlcNAc subunit on undecaprenyl-pyrophosphoryl-MurNAc-pentapeptide (lipid intermediate I) to form undecaprenyl-pyrophosphoryl-MurNAc-(pentapeptide)GlcNAc (lipid intermediate II). The polypeptide is UDP-N-acetylglucosamine--N-acetylmuramyl-(pentapeptide) pyrophosphoryl-undecaprenol N-acetylglucosamine transferase (Thermosipho melanesiensis (strain DSM 12029 / CIP 104789 / BI429)).